The chain runs to 499 residues: MADLANEEKPAIAPPVFVFQKDKGQKRSAGGSSPEGGEDSDREYGNYCPPVKRERTSSLTQFPPSQSEERSSGFRLKPPTLIHGQAPSAGLPSQKPKEQQRSVLRPAVLQAPQPKALSQTVPSSGTNGVSLLADCTGAVPAASPDTVARRSPSEAADEVCALEEKEPQKNESSNASEEEACEKKGPATQQAFVFGQNLRDRVKLINESVDEADMENAGHPSADTPTATNYFLQYISSSLENSTNSADASSNKFVFGQNMSERVLSPPKLNEVSSDANRENAAVESGSESSSQEATPEKESLAESAAAYTKATARKCLLEKVEVITGEEAESNVLQMQCKLFVFDKTSQSWVERGRGLLRLNDMASTDDGTLQSRLVMRTQGSLRLILNTKLWAQMQIDKASEKSIRITAMDTEDQGVKVFLISASSKDTGQLYAALHHRILALRSRVEQEQEAKMPVPEPGAAPSNEEDDSDDDDVLAPSGATAAGAGDEGDGQTTGST.

Residues 1–10 (MADLANEEKP) show a composition bias toward basic and acidic residues. 3 disordered regions span residues 1–128 (MADL…GTNG), 141–196 (AASP…VFGQ), and 264–303 (LSPPKLNEVSSDANRENAAVESGSESSSQEATPEKESLAE). Position 2 is an N-acetylalanine (Ala-2). An N6-acetyllysine mark is found at Lys-9 and Lys-21. Phosphoserine occurs at positions 32, 33, and 40. Positions 49-57 (PPVKRERTS) match the Nuclear localization signal motif. Phosphothreonine is present on Thr-56. Polar residues-rich tracts occupy residues 57 to 66 (SSLTQFPPSQ) and 116 to 128 (ALSQTVPSSGTNG). Ser-58 is subject to Phosphoserine. A phosphoserine mark is found at Ser-151, Ser-265, Ser-285, Ser-287, and Ser-304. The 141-residue stretch at 310 to 450 (KATARKCLLE…LALRSRVEQE (141 aa)) folds into the RanBD1 domain. The tract at residues 447–499 (VEQEQEAKMPVPEPGAAPSNEEDDSDDDDVLAPSGATAAGAGDEGDGQTTGST) is disordered. A compositionally biased stretch (acidic residues) spans 466 to 476 (NEEDDSDDDDV). Ser-471 is subject to Phosphoserine. A compositionally biased stretch (low complexity) spans 481-499 (GATAAGAGDEGDGQTTGST).

In terms of assembly, interacts with CHC1 in a Ran-stimulated manner. Interacts with XPO1. Interacts (via its C-terminal R domain) with SMAD2 (dephosphorylated form via its MH1 and MH2 domains); the interaction results in the nuclear export of SMAD2 and termination of the TGF-beta signaling. Interacts (via its C-terminal R domain) with SMAD3 (dephosphorylated form via its MH1 domain); the interaction results in the nuclear export of SMAD3 and termination of the TGF-beta signaling. Post-translationally, phosphorylation at Ser-58 promotes its import into the nucleus.

The protein localises to the cytoplasm. Its subcellular location is the nucleus. Its function is as follows. Acts as a cofactor for XPO1/CRM1-mediated nuclear export, perhaps as export complex scaffolding protein. Bound to XPO1/CRM1, stabilizes the XPO1/CRM1-cargo interaction. In the absence of Ran-bound GTP prevents binding of XPO1/CRM1 to the nuclear pore complex. Binds to CHC1/RCC1 and increases the guanine nucleotide exchange activity of CHC1/RCC1. Recruits XPO1/CRM1 to CHC1/RCC1 in a Ran-dependent manner. Negative regulator of TGF-beta signaling through interaction with the R-SMAD proteins, SMAD2 and SMAD3, and mediating their nuclear export. The polypeptide is Ran-binding protein 3 (RANBP3) (Macaca fascicularis (Crab-eating macaque)).